The following is an 815-amino-acid chain: uncharacterized protein (815 aa).

A DNA-binding region (zn(2)-C6 fungal-type) is located at residues 31–57 (CDMCRRKKIKCDGLRPCKNCKAGKLEC). The helical transmembrane segment at 560-580 (YWTTVYCGFSTIVTLIFAALL) threads the bilayer. Disordered regions lie at residues 646 to 668 (ESNV…SNTQ) and 769 to 792 (DPDV…FNPT). Positions 780–792 (SSSLNNSTPFNPT) are enriched in polar residues.

Its subcellular location is the cytoplasm. It is found in the nucleus membrane. This is an uncharacterized protein from Schizosaccharomyces pombe (strain 972 / ATCC 24843) (Fission yeast).